The primary structure comprises 456 residues: Solute carrier family 38 member 6 (456 aa).

M1 bears the N-acetylmethionine mark. S4 and S7 each carry phosphoserine. 5 helical membrane passes run 42-62, 85-105, 111-131, 170-190, and 191-211; these read SPGV…MGSG, VALL…QTAV, LGLF…IIIQ, LLII…KIGF, and LGYT…VVII. Cysteines 218 and 238 form a disulfide. N233 carries N-linked (GlcNAc...) asparagine glycosylation. A helical membrane pass occupies residues 250–270; the sequence is AYALPTMAFSFLCHTSILPIY. A glycan (N-linked (GlcNAc...) asparagine) is linked at N283. The next 5 helical transmembrane spans lie at 288–308, 327–347, 371–391, 394–414, and 431–451; these read AIAL…LTFY, VVVM…VPLI, FLIT…VPDI, VFGV…PGLF, and AFVL…LIIF.

It belongs to the amino acid/polyamine transporter 2 family.

The protein localises to the cell membrane. The protein resides in the synapse. It catalyses the reaction L-glutamine(out) = L-glutamine(in). The enzyme catalyses L-glutamate(out) = L-glutamate(in). Functionally, amino acid transporter with an apparent selectivity for L-glutamine and L-glutamate. May facilitate glutamine uptake in excitatory neurons. The transport mechanism remains to be elucidated. This Homo sapiens (Human) protein is Solute carrier family 38 member 6.